The chain runs to 67 residues: Light-harvesting protein B-870 alpha chain (67 aa).

Met1 is modified (N-formylmethionine; in strain DSM 149 and DSM 151). Topologically, residues 1–12 are cytoplasmic; sequence MWRIWRLFDPMR. The helical transmembrane segment at 13–33 threads the bilayer; that stretch reads AMVAQAVFLLGLAVLIHLMLL. An a bacteriochlorophyll-binding site is contributed by His29. Residues 34–67 are Periplasmic-facing; the sequence is GTNKYNWLDGAKKAPAATAVAPVPAEVTSLAQAK.

It belongs to the antenna complex alpha subunit family. An alpha/beta heterodimer. The core complex is formed by different alpha and beta chains, binding bacteriochlorophyll molecules, and arranged most probably in tetrameric structures disposed around the reaction center. The non-pigmented gamma chains may constitute additional components. The N-terminus is blocked.

It localises to the cell inner membrane. Antenna complexes are light-harvesting systems, which transfer the excitation energy to the reaction centers. The protein is Light-harvesting protein B-870 alpha chain (pufA) of Rubrivivax gelatinosus (Rhodocyclus gelatinosus).